We begin with the raw amino-acid sequence, 611 residues long: MASKIIAGKPDDTEYEIIEGESESALAAGTSPWMNSSTLKLRHRIGRGPFGDVWLATHHQSTEDYDEHHEVAIKMLYPIKEDQRRVVVDKFEDLFSKCQGLENVCLLRGVSSINGKICVVMKFYEGSLGDKMARLKGGKLSLPDVLRYGVDLATGILELHSKGFLILNLKPSNFLLSDNDKAILGDVGIPYLLLSIPLPSSDMTERLGTPNYMAPEQWQPDVRGPMSFETDSWGFGCSIVEMLTGVQPWSGRSADEIYDLVVRKQEKLSIPSSIPPPLENLLRGCFMYDLRSRPSMTDILLVLKSLQNSEEEQVRRGIDSREIRKSSATLGYTEWFLSKDHLQVRDTVRSRKPANSCKHENMDVPEGMVVGLERDSTDPDGFVLVKVHGVHDPLRVHVSVLERVTNGLASGDWVRLKVRKDKRHSPVGVLHSIDREGNVAVGFIGLPTLWKGTSSQLQMAKVYSVGQFVKLKANVVIPRFKWMRKGRGIWATGRISQVLPNGCLEVDFPGMLPFGEEHGSYLADPAEVEIVNFNTCQGAVEKYQHLEDFHWAVRPLLIAMGLLTAMKLGICVRKKIGRSKDGKQRDGSTGQGDCKIPDGKGSDKSKWLVFF.

The Cytoplasmic segment spans residues 1 to 555; it reads MASKIIAGKP…LEDFHWAVRP (555 aa). The region spanning 39 to 306 is the Protein kinase domain; sequence LKLRHRIGRG…TDILLVLKSL (268 aa). ATP contacts are provided by residues 45–53 and Lys-74; that span reads IGRGPFGDV. The helical transmembrane segment at 556–572 threads the bilayer; that stretch reads LLIAMGLLTAMKLGICV. Residues 573-611 are Chloroplast intermembrane-facing; it reads RKKIGRSKDGKQRDGSTGQGDCKIPDGKGSDKSKWLVFF. Residues 579-606 form a disordered region; the sequence is SKDGKQRDGSTGQGDCKIPDGKGSDKSK. A compositionally biased stretch (basic and acidic residues) spans 595–606; that stretch reads KIPDGKGSDKSK.

This sequence belongs to the protein kinase superfamily. Ser/Thr protein kinase family. Associates with the TOC complex containing, at least, translocons at the chloroplast envelope (e.g. TOCs and TICs such as TOC159, TOC75, TOC33 and TIC56).

The protein resides in the plastid. Its subcellular location is the chloroplast outer membrane. It catalyses the reaction L-seryl-[protein] + ATP = O-phospho-L-seryl-[protein] + ADP + H(+). It carries out the reaction L-threonyl-[protein] + ATP = O-phospho-L-threonyl-[protein] + ADP + H(+). Functionally, serine/threonine protein kinase acting as a regulatory component of the plastid protein import machinery by phosphorylating import receptors (e.g. the A-domain of TOC159, TOC120 and TOC132). Supports preprotein import and contributes to efficient chloroplast biogenesis, thus being required for survival during de-etiolation. This chain is Protein KINASE OF THE OUTER CHLOROPLAST MEMBRANE 1, found in Arabidopsis thaliana (Mouse-ear cress).